We begin with the raw amino-acid sequence, 136 residues long: Large-conductance mechanosensitive channel (136 aa).

A run of 2 helical transmembrane segments spans residues phenylalanine 10–glycine 30 and glycine 76–isoleucine 96.

The protein belongs to the MscL family. As to quaternary structure, homopentamer.

The protein localises to the cell inner membrane. In terms of biological role, channel that opens in response to stretch forces in the membrane lipid bilayer. May participate in the regulation of osmotic pressure changes within the cell. In Pectobacterium atrosepticum (strain SCRI 1043 / ATCC BAA-672) (Erwinia carotovora subsp. atroseptica), this protein is Large-conductance mechanosensitive channel.